The sequence spans 1251 residues: ATP-dependent helicase/nuclease subunit A (1251 aa).

Residues 5-481 (TKWTDEQWEA…IILSRNFRSR (477 aa)) enclose the UvrD-like helicase ATP-binding domain. 26-33 (AAAGAGKT) serves as a coordination point for ATP. The 299-residue stretch at 526-824 (TVGGEVEFHL…RIMSIHKSKG (299 aa)) folds into the UvrD-like helicase C-terminal domain. The disordered stretch occupies residues 544 to 565 (NFTFENEGEEGRQADEGEEDEE).

This sequence belongs to the helicase family. AddA subfamily. As to quaternary structure, heterodimer of AddA and AddB/RexB. It depends on Mg(2+) as a cofactor.

It carries out the reaction Couples ATP hydrolysis with the unwinding of duplex DNA by translocating in the 3'-5' direction.. It catalyses the reaction ATP + H2O = ADP + phosphate + H(+). In terms of biological role, the heterodimer acts as both an ATP-dependent DNA helicase and an ATP-dependent, dual-direction single-stranded exonuclease. Recognizes the chi site generating a DNA molecule suitable for the initiation of homologous recombination. The AddA nuclease domain is required for chi fragment generation; this subunit has the helicase and 3' -&gt; 5' nuclease activities. This chain is ATP-dependent helicase/nuclease subunit A, found in Acetivibrio thermocellus (strain ATCC 27405 / DSM 1237 / JCM 9322 / NBRC 103400 / NCIMB 10682 / NRRL B-4536 / VPI 7372) (Clostridium thermocellum).